The sequence spans 260 residues: Phosphatidate cytidylyltransferase (260 aa).

The next 7 helical transmembrane spans lie at 9–29, 46–66, 70–90, 102–122, 130–150, 172–192, and 196–216; these read IIAL…LMLF, MIKF…IIML, AGEW…FIVL, FMDA…FMYF, LRYI…AYIF, FFGG…FVDL, and IWLL…GDLV.

It belongs to the CDS family.

The protein resides in the cell membrane. It catalyses the reaction a 1,2-diacyl-sn-glycero-3-phosphate + CTP + H(+) = a CDP-1,2-diacyl-sn-glycerol + diphosphate. It participates in phospholipid metabolism; CDP-diacylglycerol biosynthesis; CDP-diacylglycerol from sn-glycerol 3-phosphate: step 3/3. In Staphylococcus epidermidis (strain ATCC 35984 / DSM 28319 / BCRC 17069 / CCUG 31568 / BM 3577 / RP62A), this protein is Phosphatidate cytidylyltransferase (cdsA).